Reading from the N-terminus, the 547-residue chain is T-complex protein 1 subunit alpha (547 aa).

It belongs to the TCP-1 chaperonin family. In terms of assembly, heterooligomeric complex of about 850 to 900 kDa that forms two stacked rings, 12 to 16 nm in diameter.

The protein localises to the cytoplasm. Functionally, molecular chaperone; assists the folding of proteins upon ATP hydrolysis. Known to play a role, in vitro, in the folding of actin and tubulin. The protein is T-complex protein 1 subunit alpha of Tetrahymena pyriformis.